A 431-amino-acid chain; its full sequence is Serine hydroxymethyltransferase 3 (431 aa).

Residues L131 and 135–137 (GHL) each bind (6S)-5,6,7,8-tetrahydrofolate. K240 bears the N6-(pyridoxal phosphate)lysine mark.

Belongs to the SHMT family. As to quaternary structure, homodimer. Pyridoxal 5'-phosphate is required as a cofactor.

It is found in the cytoplasm. It carries out the reaction (6R)-5,10-methylene-5,6,7,8-tetrahydrofolate + glycine + H2O = (6S)-5,6,7,8-tetrahydrofolate + L-serine. Its pathway is one-carbon metabolism; tetrahydrofolate interconversion. It functions in the pathway amino-acid biosynthesis; glycine biosynthesis; glycine from L-serine: step 1/1. In terms of biological role, catalyzes the reversible interconversion of serine and glycine with tetrahydrofolate (THF) serving as the one-carbon carrier. This reaction serves as the major source of one-carbon groups required for the biosynthesis of purines, thymidylate, methionine, and other important biomolecules. Also exhibits THF-independent aldolase activity toward beta-hydroxyamino acids, producing glycine and aldehydes, via a retro-aldol mechanism. The protein is Serine hydroxymethyltransferase 3 of Colwellia psychrerythraea (strain 34H / ATCC BAA-681) (Vibrio psychroerythus).